Consider the following 357-residue polypeptide: mRNA endoribonuclease toxin LS (357 aa).

As to quaternary structure, forms homodimer in solution. Forms a complex with cognate antitoxin RnlB and with enterobacteria phage T4 antitoxin Dmd.

It is found in the cytoplasm. In terms of biological role, toxic component of a type II toxin-antitoxin (TA) system. A stable (half-life 27.6 minutes) endoribonuclease that in the absence of cognate antitoxin RnlB causes generalized RNA degradation. Degrades late enterobacteria phage T4 mRNAs, protecting the host against T4 reproduction. Activity is inhibited by cognate antitoxin RnlB and by enterobacteria phage T4 protein Dmd. Targets cyaA mRNA. The sequence is that of mRNA endoribonuclease toxin LS (rnlA) from Escherichia coli (strain K12).